A 317-amino-acid polypeptide reads, in one-letter code: Porphobilinogen deaminase (317 aa).

C242 carries the post-translational modification S-(dipyrrolylmethanemethyl)cysteine.

It belongs to the HMBS family. In terms of assembly, monomer. It depends on dipyrromethane as a cofactor.

It catalyses the reaction 4 porphobilinogen + H2O = hydroxymethylbilane + 4 NH4(+). Its pathway is porphyrin-containing compound metabolism; protoporphyrin-IX biosynthesis; coproporphyrinogen-III from 5-aminolevulinate: step 2/4. In terms of biological role, tetrapolymerization of the monopyrrole PBG into the hydroxymethylbilane pre-uroporphyrinogen in several discrete steps. This Colwellia psychrerythraea (strain 34H / ATCC BAA-681) (Vibrio psychroerythus) protein is Porphobilinogen deaminase.